We begin with the raw amino-acid sequence, 212 residues long: Mediator of RNA polymerase II transcription subunit 20 (212 aa).

The protein belongs to the Mediator complex subunit 20 family. In terms of assembly, component of the Mediator complex, which is composed of MED1, MED4, MED6, MED7, MED8, MED9, MED10, MED11, MED12, MED13, MED13L, MED14, MED15, MED16, MED17, MED18, MED19, MED20, MED21, MED22, MED23, MED24, MED25, MED26, MED27, MED29, MED30, MED31, CCNC, CDK8 and CDC2L6/CDK11. The MED12, MED13, CCNC and CDK8 subunits form a distinct module termed the CDK8 module. Mediator containing the CDK8 module is less active than Mediator lacking this module in supporting transcriptional activation. Individual preparations of the Mediator complex lacking one or more distinct subunits have been variously termed ARC, CRSP, DRIP, PC2, SMCC and TRAP. Interacts with PPARG.

The protein resides in the nucleus. In terms of biological role, component of the Mediator complex, a coactivator involved in the regulated transcription of nearly all RNA polymerase II-dependent genes. Mediator functions as a bridge to convey information from gene-specific regulatory proteins to the basal RNA polymerase II transcription machinery. Mediator is recruited to promoters by direct interactions with regulatory proteins and serves as a scaffold for the assembly of a functional preinitiation complex with RNA polymerase II and the general transcription factors. The chain is Mediator of RNA polymerase II transcription subunit 20 (Med20) from Mus musculus (Mouse).